The following is a 793-amino-acid chain: Coiled-coil domain-containing protein 175 (793 aa).

Coiled coils occupy residues 131-163, 205-377, 431-535, 562-679, and 716-745; these read EINT…NEAL, KRED…VLSE, KTVY…MLMK, LPQL…KYRE, and LVDN…QHVS.

This Homo sapiens (Human) protein is Coiled-coil domain-containing protein 175 (CCDC175).